Reading from the N-terminus, the 536-residue chain is Austinoid biosynthesis cluster protein W (536 aa).

Positions 1-19 are cleaved as a signal peptide; it reads MKHPTVALLGVGMLGCAAA. 5 disordered regions span residues 141 to 164, 185 to 220, 261 to 302, 385 to 423, and 491 to 536; these read GSAP…PGFP, SLPG…PGFS, FGVP…ASNG, PGSA…ASNG, and PSPT…SSAE. Residues 195-208 are compositionally biased toward low complexity; it reads SGPSQAAAAPSTGD. A compositionally biased stretch (gly residues) spans 209–220; the sequence is SGSGLPGSPGFS. Low complexity-rich tracts occupy residues 287-302 and 408-423; these read AGNA…ASNG.

It functions in the pathway secondary metabolite biosynthesis; terpenoid biosynthesis. Part of the gene cluster that mediates the biosynthesis of calidodehydroaustin, a fungal meroterpenoid. The first step of the pathway is the synthesis of 3,5-dimethylorsellinic acid by the polyketide synthase ausA. 3,5-dimethylorsellinic acid is then prenylated by the polyprenyl transferase ausN. Further epoxidation by the FAD-dependent monooxygenase ausM and cyclization by the probable terpene cyclase ausL lead to the formation of protoaustinoid A. Protoaustinoid A is then oxidized to spiro-lactone preaustinoid A3 by the combined action of the FAD-binding monooxygenases ausB and ausC, and the dioxygenase ausE. Acid-catalyzed keto-rearrangement and ring contraction of the tetraketide portion of preaustinoid A3 by ausJ lead to the formation of preaustinoid A4. The aldo-keto reductase ausK, with the help of ausH, is involved in the next step by transforming preaustinoid A4 into isoaustinone which is in turn hydroxylated by the P450 monooxygenase ausI to form austinolide. The cytochrome P450 monooxygenase ausG modifies austinolide to austinol. Austinol is further acetylated to austin by the O-acetyltransferase ausP, which spontaneously changes to dehydroaustin. The cytochrome P450 monooxygenase ausR then converts dehydroaustin is into 7-dehydrodehydroaustin. The hydroxylation catalyzed by ausR permits the O-acetyltransferase ausQ to add an additional acetyl group to the molecule, leading to the formation of acetoxydehydroaustin. The short chain dehydrogenase ausT catalyzes the reduction of the double bond present between carbon atoms 1 and 2 to convert 7-dehydrodehydroaustin into 1,2-dihydro-7-hydroxydehydroaustin. AusQ catalyzes not only an acetylation reaction but also the addition of the PKS ausV diketide product to 1,2-dihydro-7-hydroxydehydroaustin, forming precalidodehydroaustin. Finally, the iron/alpha-ketoglutarate-dependent dioxygenase converts precalidodehydroaustin into calidodehydroaustin. The chain is Austinoid biosynthesis cluster protein W from Aspergillus calidoustus.